The following is a 223-amino-acid chain: Adenylate kinase (223 aa).

An ATP-binding site is contributed by 10–15 (GAGKGT). Positions 30–59 (STGDILRQAVKEGTEVGKIAGELMKAGKLI) are NMP. AMP-binding positions include Thr31, Arg36, 57–59 (KLI), 85–88 (GFPR), and Gln92. Residues 126-163 (GRYVCAQCGAGYHDEFKRPHKEGVCDICGSTEFKRRPD) form an LID region. Arg127 contributes to the ATP binding site. Cys130, Cys133, Cys150, and Cys153 together coordinate Zn(2+). AMP-binding residues include Arg160 and Arg172. Leu200 contacts ATP.

The protein belongs to the adenylate kinase family. Monomer.

The protein resides in the cytoplasm. It catalyses the reaction AMP + ATP = 2 ADP. The protein operates within purine metabolism; AMP biosynthesis via salvage pathway; AMP from ADP: step 1/1. Catalyzes the reversible transfer of the terminal phosphate group between ATP and AMP. Plays an important role in cellular energy homeostasis and in adenine nucleotide metabolism. This is Adenylate kinase from Zymomonas mobilis subsp. mobilis (strain ATCC 31821 / ZM4 / CP4).